The following is a 758-amino-acid chain: MVGGRRLGKRGSPLLRWSVKQESFSHGFSKSDLQALSSICDAIMPPVPLESLNLEMKLKVLRNDALLSFFKSSSSESHVRPDEVAELLATKAIPLTVLVVRIVLRILTFRLGTLLLCGLVCLDKKHWPFLLKFSEMSLEKREKVLQRWNTQWYNPLARIGFMMIKAIFLFYYFTWTNENSENPVWDAINYSVEIGENEDMEQKERPLDEGIIETAKEDEMTIKQRMINKGLKVTEDRERDTYKIECDAVVVGSGCGGGVAAAILAKSGLRVVVIEKGNYFAPRDYSALEGPSMFELFESNSLMMTHDGRFRFMAGSTVGGGSVVNWAASLKTPDAIIEEWSVHRGISIYSSEKYKAAMGIVCKRLGVTEKIIREGFQNQILRKGCEKLGLDVTIVPRNSTEKHYCGSCSYGCPTGEKRGTDSTWLVDAVNNNAVILTQCKAEKLILADNDANKREESGRRKRCLGVAASLSHQTRKKLQINAKVTIVACGSLKTPGLLASSGLKNSNISRGLHIHPIMMAWGYFPEKNSELEGAAHEGEIVTSLHYVHPMDSTTPNITLETPAIGPGTFAALTPWVSGSDMKERMAKYARTAHIFAMVRDEGVGEVKGDIVKYRLTKADEENLTIGLKQALRILVAAGAAEVGTYRSDGQRMKCDGIKQKDLEAFLDTVNAPPGVVSMSKHWTQSFTAHQIGCCRMGATEKEGAIDGKGESWEAEDLYVCDASVLPTALGVNPMITVQSTAYCISNRIAELMKKRKKD.

2 helical membrane passes run 102–122 (IVLR…LVCL) and 155–175 (PLAR…YFTW). 246 to 261 (CDAVVVGSGCGGGVAA) contributes to the FAD binding site. The active-site Proton acceptor is His-689.

Belongs to the GMC oxidoreductase family.

It localises to the membrane. The enzyme catalyses a long-chain primary fatty alcohol + O2 = a long-chain fatty aldehyde + H2O2. Its function is as follows. Long-chain fatty alcohol oxidase involved in the omega-oxidation pathway of lipid degradation. This chain is Long-chain-alcohol oxidase FAO1 (FAO1), found in Arabidopsis thaliana (Mouse-ear cress).